Reading from the N-terminus, the 335-residue chain is Carboxylesterase 1 (335 aa).

The short motif at His-90–Gly-92 is the Involved in the stabilization of the negatively charged intermediate by the formation of the oxyanion hole element. Paraoxon is bound by residues Gly-92–Gly-93, Ser-169, and Ala-170. Residue Ser-169 is part of the active site. Residues Asp-276 and His-306 contribute to the active site.

Belongs to the 'GDXG' lipolytic enzyme family.

The catalysed reaction is a carboxylic ester + H2O = an alcohol + a carboxylate + H(+). Is inhibited by the organophosphates paraoxon and dimethylchlorophosphate (DMCP). Its function is as follows. Carboxylesterase acting on esters with varying acyl chain length. This is Carboxylesterase 1 (CXE1) from Actinidia eriantha (Velvet vine).